Here is a 319-residue protein sequence, read N- to C-terminus: Non-homologous end joining protein Ku (319 aa).

The Ku domain maps to I10–E188. Residues Q252–A319 form a disordered region. Residues S260 to R274 are compositionally biased toward basic and acidic residues. Basic residues predominate over residues T305–A319.

The protein belongs to the prokaryotic Ku family. Homodimer. Interacts with LigD.

Its function is as follows. With LigD forms a non-homologous end joining (NHEJ) DNA repair enzyme, which repairs dsDNA breaks with reduced fidelity. Binds linear dsDNA with 5'- and 3'- overhangs but not closed circular dsDNA nor ssDNA. Recruits and stimulates the ligase activity of LigD. The protein is Non-homologous end joining protein Ku of Streptomyces avermitilis (strain ATCC 31267 / DSM 46492 / JCM 5070 / NBRC 14893 / NCIMB 12804 / NRRL 8165 / MA-4680).